Consider the following 134-residue polypeptide: Small ribosomal subunit protein uS11 (134 aa).

The protein belongs to the universal ribosomal protein uS11 family. As to quaternary structure, part of the 30S ribosomal subunit. Interacts with proteins S7 and S18. Binds to IF-3.

Located on the platform of the 30S subunit, it bridges several disparate RNA helices of the 16S rRNA. Forms part of the Shine-Dalgarno cleft in the 70S ribosome. The protein is Small ribosomal subunit protein uS11 of Micrococcus luteus (strain ATCC 4698 / DSM 20030 / JCM 1464 / CCM 169 / CCUG 5858 / IAM 1056 / NBRC 3333 / NCIMB 9278 / NCTC 2665 / VKM Ac-2230) (Micrococcus lysodeikticus).